A 462-amino-acid chain; its full sequence is MAPRGSGRLEAVVFAVMVLFCSGTSTATTAAAPASSPGIQTSSPAPGTGSTRLPGTRASTQQLTMNCSAGGILYSVLGGPFALRCRLSRAPKANETLYAMLAPLPSNTMAAADRPHGSLSHLGNGRAPLSTIYRYNVTAKAGTLDPSAQRSGLAVAIDTESSGDPISFVIYSNMSTRAHIGEYIWRMHDAGGTTADYATIVLLARPPIAAKAPSTNFFLDADVASALVVEASGAYPPSTLTGAWFIDGNRSAESAGFATNVRQIITSDGEVDVKWFLINTKDSPPPSVTPQTTVTFVATWTPPKGFETVFPDGKVTLTKVLRPLWLRKPIVQVSRFPPGYLVCRASDILCDHGDLQWSAGGKIVKSEHQAARTRMHLGSKLCALVQILDIPEDTSLQQSVTYTCTLRGYERIYNWLNGTIELDNMPLRQGRPMLICLAVVMGLFVLGSFLAVVISACLWGSG.

The N-terminal stretch at 1-23 (MAPRGSGRLEAVVFAVMVLFCSG) is a signal peptide. The Virion surface portion of the chain corresponds to 24–433 (TSTATTAAAP…NMPLRQGRPM (410 aa)). Residues 29–38 (TAAAPASSPG) show a composition bias toward low complexity. The disordered stretch occupies residues 29 to 57 (TAAAPASSPGIQTSSPAPGTGSTRLPGTR). The segment covering 39 to 57 (IQTSSPAPGTGSTRLPGTR) has biased composition (polar residues). N-linked (GlcNAc...) asparagine; by host glycans are attached at residues N66, N94, N136, N173, N249, and N417. Residues 434–454 (LICLAVVMGLFVLGSFLAVVI) traverse the membrane as a helical segment. Topologically, residues 455-462 (SACLWGSG) are cytoplasmic.

This sequence belongs to the herpesviridae glycoprotein C family.

The protein resides in the virion membrane. The sequence is that of Envelope glycoprotein C (gC) from Psittacid herpesvirus 1 (isolate Amazon parrot/-/97-0001/1997) (PsHV-1).